The primary structure comprises 302 residues: uncharacterized protein (302 aa).

This is an uncharacterized protein from Schizosaccharomyces pombe (strain 972 / ATCC 24843) (Fission yeast).